The primary structure comprises 65 residues: Large ribosomal subunit protein bL35 (65 aa).

The segment at 1-65 is disordered; sequence MQKIKTNRSA…KELKRLLPGM (65 aa). 2 stretches are compositionally biased toward basic residues: residues 10–19 and 33–47; these read AAKRFKRTKS and LTKK…LRKS. A compositionally biased stretch (basic and acidic residues) spans 54–65; the sequence is NNKELKRLLPGM.

Belongs to the bacterial ribosomal protein bL35 family.

This Desulfosudis oleivorans (strain DSM 6200 / JCM 39069 / Hxd3) (Desulfococcus oleovorans) protein is Large ribosomal subunit protein bL35.